The chain runs to 1113 residues: Protein translocase subunit SecA (1113 aa).

Residues glutamine 175, 193–197 (GEGKT), and aspartate 694 each bind ATP. The span at 1042 to 1072 (RHAAEQRTDMSKYRTQKDDIEAQQKAQRDAA) shows a compositional bias: basic and acidic residues. A disordered region spans residues 1042 to 1113 (RHAAEQRTDM…KFKQCHGRNL (72 aa)). Zn(2+) is bound by residues cysteine 1097, cysteine 1099, cysteine 1108, and histidine 1109. Residues 1103 to 1113 (KKFKQCHGRNL) show a composition bias toward basic residues.

This sequence belongs to the SecA family. Monomer and homodimer. Part of the essential Sec protein translocation apparatus which comprises SecA, SecYEG and auxiliary proteins SecDF. Other proteins may also be involved. Requires Zn(2+) as cofactor.

The protein resides in the cell inner membrane. Its subcellular location is the cytoplasm. It carries out the reaction ATP + H2O + cellular proteinSide 1 = ADP + phosphate + cellular proteinSide 2.. In terms of biological role, part of the Sec protein translocase complex. Interacts with the SecYEG preprotein conducting channel. Has a central role in coupling the hydrolysis of ATP to the transfer of proteins into and across the cell membrane, serving as an ATP-driven molecular motor driving the stepwise translocation of polypeptide chains across the membrane. This is Protein translocase subunit SecA from Porphyromonas gingivalis (strain ATCC 33277 / DSM 20709 / CIP 103683 / JCM 12257 / NCTC 11834 / 2561).